A 740-amino-acid polypeptide reads, in one-letter code: Arf-GAP with coiled-coil, ANK repeat and PH domain-containing protein 1 (740 aa).

The BAR domain maps to M1–Q226. The required for formation of endosomal tubules when overexpressed with PIP5K1C stretch occupies residues M1–L382. The 96-residue stretch at G265–A360 folds into the PH domain. One can recognise an Arf-GAP domain in the interval G405 to R527. Residues G405–L740 are required for interaction with GULP1. The C4-type zinc-finger motif lies at C420 to C443. Y485 is modified (3'-nitrotyrosine). The prevents interaction with ITGB1 when S-554 is not phosphorylated stretch occupies residues E525 to L566. Residues E525–H581 are disordered. The span at G538 to R549 shows a compositional bias: pro residues. S554 is modified (phosphoserine; by PKB). ANK repeat units follow at residues D606–Q635, A639–A668, and E672–A702.

Banana-shaped homodimer laterally assembling into tetramers, the tetramers further pack helically onto the membrane. Interacts with GTP-bound ARF6. Interacts with third cytoplasmic loop of SLC2A4/GLUT4. Interacts with CLTC. Interacts with GULP1. Forms a complex with GDP-bound ARF6 and GULP1. Interacts with ITGB1; required for ITGB1 recycling. In terms of processing, phosphorylation at Ser-554 by PKB is required for interaction with ITGB1, export of ITGB1 from recycling endosomes to the cell surface and ITGB1-dependent cell migration. As to expression, highest level in lung and spleen. Low level in heart, kidney, liver and pancreas.

It is found in the recycling endosome membrane. With respect to regulation, GAP activity stimulated by phosphatidylinositol 4,5-bisphosphate (PIP2) and phosphatidic acid. Its function is as follows. GTPase-activating protein (GAP) for ADP ribosylation factor 6 (ARF6) required for clathrin-dependent export of proteins from recycling endosomes to trans-Golgi network and cell surface. Required for regulated export of ITGB1 from recycling endosomes to the cell surface and ITGB1-dependent cell migration. The chain is Arf-GAP with coiled-coil, ANK repeat and PH domain-containing protein 1 (ACAP1) from Homo sapiens (Human).